Consider the following 365-residue polypeptide: Succinyl-diaminopimelate desuccinylase (365 aa).

H65 contacts Zn(2+). D67 is a catalytic residue. Zn(2+) is bound at residue D96. The Proton acceptor role is filled by E126. Positions 127, 155, and 340 each coordinate Zn(2+).

It belongs to the peptidase M20A family. DapE subfamily. As to quaternary structure, homodimer. Zn(2+) serves as cofactor. Co(2+) is required as a cofactor.

It carries out the reaction N-succinyl-(2S,6S)-2,6-diaminopimelate + H2O = (2S,6S)-2,6-diaminopimelate + succinate. Its pathway is amino-acid biosynthesis; L-lysine biosynthesis via DAP pathway; LL-2,6-diaminopimelate from (S)-tetrahydrodipicolinate (succinylase route): step 3/3. In terms of biological role, catalyzes the hydrolysis of N-succinyl-L,L-diaminopimelic acid (SDAP), forming succinate and LL-2,6-diaminopimelate (DAP), an intermediate involved in the bacterial biosynthesis of lysine and meso-diaminopimelic acid, an essential component of bacterial cell walls. This chain is Succinyl-diaminopimelate desuccinylase, found in Campylobacter jejuni subsp. jejuni serotype O:6 (strain 81116 / NCTC 11828).